Reading from the N-terminus, the 277-residue chain is Methyltransferase adrK (277 aa).

Residues 123 to 124 (DL), 150 to 151 (DV), and 151 to 152 (VL) each bind S-adenosyl-L-methionine.

This sequence belongs to the class I-like SAM-binding methyltransferase superfamily. Homodimer.

It participates in secondary metabolite biosynthesis; terpenoid biosynthesis. In terms of biological role, methyltransferase; part of the gene cluster that mediates the biosynthesis of andrastins, meroterpenoid compounds that exhibit inhibitory activity against ras farnesyltransferase, suggesting that they could be promising leads for antitumor agents. The first step of the pathway is the synthesis of 3,5-dimethylorsellinic acid (DMOA) by the polyketide synthase adrD via condensation of one acetyl-CoA starter unit with 3 malonyl-CoA units and 2 methylations. DMAO is then converted to farnesyl-DMAO by the prenyltransferase adrG. The methyltransferase adrK catalyzes the methylation of the carboxyl group of farnesyl-DMAO to farnesyl-DMAO methyl ester which is further converted to epoxyfarnesyl-DMAO methyl ester by the FAD-dependent monooxygenase adrH. The terpene cyclase adrI then catalyzes the carbon skeletal rearrangement to generate the andrastin E, the first compound in the pathway having the andrastin scaffold, with the tetracyclic ring system. The post-cyclization tailoring enzymes adrF, adrE, adrJ, and adrA, are involved in the conversion of andrastin E into andrastin A. The short chain dehydrogenase adrF is responsible for the oxidation of the C-3 a hydroxyl group of andrastin E to yield the corresponding ketone, andrastin D. The ketoreductase adrE stereoselectively reduces the carbonyl moiety to reverse the stereochemistry of the C-3 position to yield andrastin F. The acetyltransferase adrJ is the acetyltransferase that attaches the acetyl group to the C-3 hydroxyl group of andrastin F to yield andrastin C. Finally, the cytochrome P450 monooxygenase adrA catalyzes two sequential oxidation reactions of the C-23 methyl group, to generate the corresponding alcohol andrastin B, and aldehyde andrastin A. This Penicillium rubens (strain ATCC 28089 / DSM 1075 / NRRL 1951 / Wisconsin 54-1255) (Penicillium chrysogenum) protein is Methyltransferase adrK.